A 337-amino-acid polypeptide reads, in one-letter code: UDP-3-O-acylglucosamine N-acyltransferase (337 aa).

His238 acts as the Proton acceptor in catalysis.

Belongs to the transferase hexapeptide repeat family. LpxD subfamily. As to quaternary structure, homotrimer.

It carries out the reaction a UDP-3-O-[(3R)-3-hydroxyacyl]-alpha-D-glucosamine + a (3R)-hydroxyacyl-[ACP] = a UDP-2-N,3-O-bis[(3R)-3-hydroxyacyl]-alpha-D-glucosamine + holo-[ACP] + H(+). Its pathway is bacterial outer membrane biogenesis; LPS lipid A biosynthesis. In terms of biological role, catalyzes the N-acylation of UDP-3-O-acylglucosamine using 3-hydroxyacyl-ACP as the acyl donor. Is involved in the biosynthesis of lipid A, a phosphorylated glycolipid that anchors the lipopolysaccharide to the outer membrane of the cell. The chain is UDP-3-O-acylglucosamine N-acyltransferase from Xanthomonas oryzae pv. oryzae (strain KACC10331 / KXO85).